A 312-amino-acid chain; its full sequence is Malate dehydrogenase (312 aa).

NAD(+) is bound by residues 7 to 13 (GAAGGIG) and D34. Residues R81 and R87 each coordinate substrate. NAD(+)-binding positions include N94 and 117–119 (ITN). 2 residues coordinate substrate: N119 and R153. Catalysis depends on H177, which acts as the Proton acceptor. M227 serves as a coordination point for NAD(+).

The protein belongs to the LDH/MDH superfamily. MDH type 1 family. Homodimer.

It carries out the reaction (S)-malate + NAD(+) = oxaloacetate + NADH + H(+). Catalyzes the reversible oxidation of malate to oxaloacetate. The chain is Malate dehydrogenase from Shigella dysenteriae serotype 1 (strain Sd197).